The sequence spans 206 residues: Pyridoxal 5'-phosphate synthase subunit PdxT (206 aa).

An L-glutamine-binding site is contributed by 59–61 (GES). The active-site Nucleophile is the Cys-91. L-glutamine is bound by residues Arg-123 and 151-152 (IR). Active-site charge relay system residues include His-187 and Glu-189.

Belongs to the glutaminase PdxT/SNO family. In the presence of PdxS, forms a dodecamer of heterodimers. Only shows activity in the heterodimer.

It catalyses the reaction aldehydo-D-ribose 5-phosphate + D-glyceraldehyde 3-phosphate + L-glutamine = pyridoxal 5'-phosphate + L-glutamate + phosphate + 3 H2O + H(+). The enzyme catalyses L-glutamine + H2O = L-glutamate + NH4(+). Its pathway is cofactor biosynthesis; pyridoxal 5'-phosphate biosynthesis. Its function is as follows. Catalyzes the hydrolysis of glutamine to glutamate and ammonia as part of the biosynthesis of pyridoxal 5'-phosphate. The resulting ammonia molecule is channeled to the active site of PdxS. This chain is Pyridoxal 5'-phosphate synthase subunit PdxT, found in Mycobacterium sp. (strain JLS).